The sequence spans 425 residues: 3-phosphoshikimate 1-carboxyvinyltransferase (425 aa).

Residues Lys21, Ser22, and Arg26 each contribute to the 3-phosphoshikimate site. Lys21 serves as a coordination point for phosphoenolpyruvate. The phosphoenolpyruvate site is built by Gly91 and Arg119. Residues Ser164, Gln166, Asp311, and Lys338 each contribute to the 3-phosphoshikimate site. Gln166 serves as a coordination point for phosphoenolpyruvate. The active-site Proton acceptor is Asp311. Phosphoenolpyruvate-binding residues include Arg342 and Arg383.

The protein belongs to the EPSP synthase family. Monomer.

Its subcellular location is the cytoplasm. It catalyses the reaction 3-phosphoshikimate + phosphoenolpyruvate = 5-O-(1-carboxyvinyl)-3-phosphoshikimate + phosphate. It participates in metabolic intermediate biosynthesis; chorismate biosynthesis; chorismate from D-erythrose 4-phosphate and phosphoenolpyruvate: step 6/7. In terms of biological role, catalyzes the transfer of the enolpyruvyl moiety of phosphoenolpyruvate (PEP) to the 5-hydroxyl of shikimate-3-phosphate (S3P) to produce enolpyruvyl shikimate-3-phosphate and inorganic phosphate. This Campylobacter fetus subsp. fetus (strain 82-40) protein is 3-phosphoshikimate 1-carboxyvinyltransferase.